Reading from the N-terminus, the 270-residue chain is Putative phosphoenolpyruvate synthase regulatory protein (270 aa).

150-157 is an ADP binding site; sequence GVSRCGKT.

Belongs to the pyruvate, phosphate/water dikinase regulatory protein family. PSRP subfamily.

The catalysed reaction is [pyruvate, water dikinase] + ADP = [pyruvate, water dikinase]-phosphate + AMP + H(+). It carries out the reaction [pyruvate, water dikinase]-phosphate + phosphate + H(+) = [pyruvate, water dikinase] + diphosphate. Bifunctional serine/threonine kinase and phosphorylase involved in the regulation of the phosphoenolpyruvate synthase (PEPS) by catalyzing its phosphorylation/dephosphorylation. This chain is Putative phosphoenolpyruvate synthase regulatory protein, found in Shewanella frigidimarina (strain NCIMB 400).